Consider the following 359-residue polypeptide: Photosystem II protein D1 3 (359 aa).

A run of 3 helical transmembrane segments spans residues 29 to 46 (YVGWFGVLMIPTLLAATI), 118 to 133 (HFLIGIYAYMGREWEL), and 142 to 156 (WICVAYSAPVAAASA). Residue H118 participates in chlorophyll a binding. Residue Y126 coordinates pheophytin a. [CaMn4O5] cluster contacts are provided by D170 and E189. The helical transmembrane segment at 197 to 218 (FHMLGVAGVFGGSLFSAMHGSL) threads the bilayer. H198 provides a ligand contact to chlorophyll a. Residues H215 and 264 to 265 (SF) contribute to the a quinone site. H215 serves as a coordination point for Fe cation. H272 provides a ligand contact to Fe cation. A helical membrane pass occupies residues 274–288 (FLAAWPVVGIWFTAL). [CaMn4O5] cluster contacts are provided by H332, E333, D342, and A344. A propeptide spanning residues 345-359 (AAESTPVALQVPAIG) is cleaved from the precursor.

It belongs to the reaction center PufL/M/PsbA/D family. PSII is composed of 1 copy each of membrane proteins PsbA, PsbB, PsbC, PsbD, PsbE, PsbF, PsbH, PsbI, PsbJ, PsbK, PsbL, PsbM, PsbT, PsbX, PsbY, PsbZ, Psb30/Ycf12, peripheral proteins PsbO, CyanoQ (PsbQ), PsbU, PsbV and a large number of cofactors. It forms dimeric complexes. Requires The D1/D2 heterodimer binds P680, chlorophylls that are the primary electron donor of PSII, and subsequent electron acceptors. It shares a non-heme iron and each subunit binds pheophytin, quinone, additional chlorophylls, carotenoids and lipids. D1 provides most of the ligands for the Mn4-Ca-O5 cluster of the oxygen-evolving complex (OEC). There is also a Cl(-1) ion associated with D1 and D2, which is required for oxygen evolution. The PSII complex binds additional chlorophylls, carotenoids and specific lipids. as cofactor. In terms of processing, tyr-161 forms a radical intermediate that is referred to as redox-active TyrZ, YZ or Y-Z. Post-translationally, C-terminally processed by CtpA; processing is essential to allow assembly of the oxygen-evolving complex and thus photosynthetic growth.

Its subcellular location is the cellular thylakoid membrane. The catalysed reaction is 2 a plastoquinone + 4 hnu + 2 H2O = 2 a plastoquinol + O2. Its function is as follows. Photosystem II (PSII) is a light-driven water:plastoquinone oxidoreductase that uses light energy to abstract electrons from H(2)O, generating O(2) and a proton gradient subsequently used for ATP formation. It consists of a core antenna complex that captures photons, and an electron transfer chain that converts photonic excitation into a charge separation. The D1/D2 (PsbA/PsbD) reaction center heterodimer binds P680, the primary electron donor of PSII as well as several subsequent electron acceptors. In Parasynechococcus marenigrum (strain WH8102), this protein is Photosystem II protein D1 3.